Reading from the N-terminus, the 571-residue chain is Urease subunit alpha (571 aa).

Residues 129 to 571 (GGIDSHIHFI…LPMAQRYFLF (443 aa)) form the Urease domain. Ni(2+)-binding residues include His-134, His-136, and Lys-217. Lys-217 is subject to N6-carboxylysine. A substrate-binding site is contributed by His-219. Positions 246 and 272 each coordinate Ni(2+). The Proton donor role is filled by His-320. A Ni(2+)-binding site is contributed by Asp-360.

It belongs to the metallo-dependent hydrolases superfamily. Urease alpha subunit family. As to quaternary structure, heterotrimer of UreA (gamma), UreB (beta) and UreC (alpha) subunits. Three heterotrimers associate to form the active enzyme. The cofactor is Ni cation. Carboxylation allows a single lysine to coordinate two nickel ions.

It localises to the cytoplasm. It catalyses the reaction urea + 2 H2O + H(+) = hydrogencarbonate + 2 NH4(+). It functions in the pathway nitrogen metabolism; urea degradation; CO(2) and NH(3) from urea (urease route): step 1/1. This chain is Urease subunit alpha, found in Cupriavidus necator (strain ATCC 17699 / DSM 428 / KCTC 22496 / NCIMB 10442 / H16 / Stanier 337) (Ralstonia eutropha).